The sequence spans 333 residues: Ephrin-B2 (333 aa).

Positions 1 to 27 are cleaved as a signal peptide; that stretch reads MAVRRDSVWKYCWGVLMVLCRTAISKS. Positions 28–164 constitute an Ephrin RBD domain; it reads IVLEPIYWNS…TRAMKILMKV (137 aa). Residues 28 to 229 lie on the Extracellular side of the membrane; the sequence is IVLEPIYWNS…ILGSEVALFA (202 aa). Residue Asn-36 is glycosylated (N-linked (GlcNAc...) asparagine). Intrachain disulfides connect Cys-62/Cys-101 and Cys-89/Cys-153. Asn-139 is a glycosylation site (N-linked (GlcNAc...) asparagine). The tract at residues 165–213 is disordered; sequence GQDASSAGSTRNKDPTRRPELEAGTNGRSSTTSPFVKPNPGSSTDGNSA. Residues 175–185 show a composition bias toward basic and acidic residues; the sequence is RNKDPTRRPEL. Residues 190–213 are compositionally biased toward polar residues; the sequence is NGRSSTTSPFVKPNPGSSTDGNSA. The helical transmembrane segment at 230 to 250 threads the bilayer; that stretch reads GIASGCIIFIVIIITLVVLLL. Residues 251 to 333 are Cytoplasmic-facing; it reads KYRRRHRKHS…QSPANIYYKV (83 aa). A Phosphoserine modification is found at Ser-260. A Phosphothreonine modification is found at Thr-274. An Omega-N-methylarginine modification is found at Arg-277. Residues 331 to 333 carry the PDZ-binding motif; it reads YKV.

The protein belongs to the ephrin family. In terms of assembly, interacts with PDZRN3. Binds to the receptor tyrosine kinases EPHA4, EPHB4 and EPHA3. (Microbial infection) Interacts with Hendra virus and Nipah virus G protein. Post-translationally, inducible phosphorylation of tyrosine residues in the cytoplasmic domain. Lung and kidney.

It localises to the cell membrane. It is found in the cell junction. Its subcellular location is the adherens junction. Its function is as follows. Cell surface transmembrane ligand for Eph receptors, a family of receptor tyrosine kinases which are crucial for migration, repulsion and adhesion during neuronal, vascular and epithelial development. Binds promiscuously Eph receptors residing on adjacent cells, leading to contact-dependent bidirectional signaling into neighboring cells. The signaling pathway downstream of the receptor is referred to as forward signaling while the signaling pathway downstream of the ephrin ligand is referred to as reverse signaling. Binds to receptor tyrosine kinase including EPHA4, EPHA3 and EPHB4. Together with EPHB4 plays a central role in heart morphogenesis and angiogenesis through regulation of cell adhesion and cell migration. EPHB4-mediated forward signaling controls cellular repulsion and segregation from EFNB2-expressing cells. May play a role in constraining the orientation of longitudinally projecting axons. (Microbial infection) Acts as a receptor for Hendra virus and Nipah virus. This Homo sapiens (Human) protein is Ephrin-B2 (EFNB2).